A 410-amino-acid chain; its full sequence is Peptidase T (410 aa).

His79 is a Zn(2+) binding site. Asp81 is an active-site residue. Position 142 (Asp142) interacts with Zn(2+). Glu176 (proton acceptor) is an active-site residue. 3 residues coordinate Zn(2+): Glu177, Asp199, and His381.

The protein belongs to the peptidase M20B family. The cofactor is Zn(2+).

Its subcellular location is the cytoplasm. It carries out the reaction Release of the N-terminal residue from a tripeptide.. In terms of biological role, cleaves the N-terminal amino acid of tripeptides. The sequence is that of Peptidase T from Bacillus cereus (strain G9842).